The sequence spans 861 residues: Bifunctional uridylyltransferase/uridylyl-removing enzyme (861 aa).

The uridylyltransferase stretch occupies residues Met-1–Thr-322. Residues Ile-323 to Leu-679 form a uridylyl-removing region. The region spanning Val-441–Glu-557 is the HD domain. 2 consecutive ACT domains span residues Gln-680–Pro-763 and Leu-792–Ile-861.

Belongs to the GlnD family. The cofactor is Mg(2+).

It catalyses the reaction [protein-PII]-L-tyrosine + UTP = [protein-PII]-uridylyl-L-tyrosine + diphosphate. It carries out the reaction [protein-PII]-uridylyl-L-tyrosine + H2O = [protein-PII]-L-tyrosine + UMP + H(+). Its activity is regulated as follows. Uridylyltransferase (UTase) activity is inhibited by glutamine, while glutamine activates uridylyl-removing (UR) activity. Its function is as follows. Modifies, by uridylylation and deuridylylation, the PII regulatory proteins (GlnB and homologs), in response to the nitrogen status of the cell that GlnD senses through the glutamine level. Under low glutamine levels, catalyzes the conversion of the PII proteins and UTP to PII-UMP and PPi, while under higher glutamine levels, GlnD hydrolyzes PII-UMP to PII and UMP (deuridylylation). Thus, controls uridylylation state and activity of the PII proteins, and plays an important role in the regulation of nitrogen assimilation and metabolism. In Ralstonia nicotianae (strain ATCC BAA-1114 / GMI1000) (Ralstonia solanacearum), this protein is Bifunctional uridylyltransferase/uridylyl-removing enzyme.